The chain runs to 278 residues: PILR alpha-associated neural protein (278 aa).

The N-terminal stretch at 1 to 27 (MWSAQLLSQLLPLWPLLLLSVLPPAQG) is a signal peptide. The interval 25–93 (AQGSSHRSPP…PSGFEEGPPS (69 aa)) is disordered. Residues 28–174 (SSHRSPPAPA…FGGRGEGVDP (147 aa)) are Extracellular-facing. An O-linked (GalNAc...) threonine glycan is attached at T136. Residues 175 to 195 (QLYVTITISIIIVLVATGIIF) traverse the membrane as a helical segment. The Cytoplasmic segment spans residues 196-278 (KFCWDRSQKR…QLNRIPLVNL (83 aa)). The tract at residues 206–278 (RRPSGQQGAL…QLNRIPLVNL (73 aa)) is disordered. Over residues 209–225 (SGQQGALRQEESQQPLT) the composition is skewed to polar residues.

O-glycosylation at Thr-136 is essential for recognition by PILRA. Mainly expressed in brain and spinal cord. Weak expression also detected in heart, kidney, spleen and lymph node. Virtually no expression detected in liver and embryo relative to brain.

The protein localises to the membrane. In terms of biological role, acts as a ligand for PILRA in neuronal tissues, where it may be involved in immune regulation. The polypeptide is PILR alpha-associated neural protein (Pianp) (Mus musculus (Mouse)).